Reading from the N-terminus, the 37-residue chain is Large ribosomal subunit protein bL36 (37 aa).

This sequence belongs to the bacterial ribosomal protein bL36 family.

This is Large ribosomal subunit protein bL36 from Mycobacterium ulcerans (strain Agy99).